Reading from the N-terminus, the 501-residue chain is Cystine/glutamate transporter (501 aa).

Residues 1-43 (MVRKPVVSTISKGGYLQGNVNGRLPSLGNKEPPGQEKVQLKRK) are Cytoplasmic-facing. Phosphoserine is present on S26. Residues 44–64 (VTLLRGVSIIIGTIIGAGIFI) form a helical membrane-spanning segment. The Extracellular portion of the chain corresponds to 65-74 (SPKGVLQNTG). Residues 75-95 (SVGMSLTIWTVCGVLSLFGAL) traverse the membrane as a helical segment. Topologically, residues 96–101 (SYAELG) are cytoplasmic. The stretch at 102-116 (TTIKKSGGHYTYILE) is an intramembrane region. The Cytoplasmic portion of the chain corresponds to 117-130 (VFGPLPAFVRVWVE). A helical transmembrane segment spans residues 131 to 150 (LLIIRPAATAVISLAFGRYI). R135 lines the L-glutamate pocket. At 151 to 163 (LEPFFIQCEIPEL) the chain is on the extracellular side. Residues 164–179 (AIKLITAVGITVVMVL) form a helical membrane-spanning segment. Topologically, residues 180–193 (NSMSVSWSARIQIF) are cytoplasmic. The helical transmembrane segment at 194 to 210 (LTFCKLTAILIIIVPGV) threads the bilayer. Over 211-234 (MQLIKGQTQNFKDAFSGRDSSITR) the chain is Extracellular. The helical transmembrane segment at 235 to 255 (LPLAFYYGMYAYAGWFYLNFV) threads the bilayer. L-glutamate is bound at residue Y244. Residues 256-265 (TEEVENPEKT) lie on the Cytoplasmic side of the membrane. A helical membrane pass occupies residues 266-286 (IPLAICISMAIVTIGYVLTNV). The Extracellular segment spans residues 287–317 (AYFTTINAEELLLSNAVAVTFSERLLGNFSL). N314 carries an N-linked (GlcNAc...) asparagine glycan. Residues 318–338 (AVPIFVALSCFGSMNGGVFAV) traverse the membrane as a helical segment. Residues 339–364 (SRLFYVASREGHLPEILSMIHVRKHT) lie on the Cytoplasmic side of the membrane. Residues 365 to 385 (PLPAVIVLHPLTMIMLFSGDL) traverse the membrane as a helical segment. At 386 to 387 (DS) the chain is on the extracellular side. Residues 388 to 408 (LLNFLSFARWLFIGLAVAGLI) traverse the membrane as a helical segment. Topologically, residues 409 to 422 (YLRYKCPDMHRPFK) are cytoplasmic. A helical transmembrane segment spans residues 423 to 443 (VPLFIPALFSFTCLFMVALSL). Topologically, residues 444–449 (YSDPFS) are extracellular. Residues 450–470 (TGIGSVITLTGVPAYYLFIIW) form a helical membrane-spanning segment. At 471–501 (DKKPRWFRIMSEKITRTLQIILEVVPEEDKL) the chain is on the cytoplasmic side.

This sequence belongs to the amino acid-polyamine-organocation (APC) superfamily. L-type amino acid transporter (LAT) (TC 2.A.3.8) family. Disulfide-linked heterodimer with the amino acid transport protein SLC3A2/4F2hc; this interaction mediates cell membrane localization.

It localises to the cell membrane. The protein resides in the cell projection. Its subcellular location is the microvillus membrane. It catalyses the reaction L-cystine(out) + L-glutamate(in) = L-cystine(in) + L-glutamate(out). The enzyme catalyses an L-alpha-amino acid(in) + L-kynurenine(out) = an L-alpha-amino acid(out) + L-kynurenine(in). It carries out the reaction N-acetyl-L-cysteine(out) + L-glutamate(in) = N-acetyl-L-cysteine(in) + L-glutamate(out). In terms of biological role, heterodimer with SLC3A2, that functions as an antiporter by mediating the exchange of extracellular anionic L-cystine and intracellular L-glutamate across the cellular plasma membrane. Provides L-cystine for the maintenance of the redox balance between extracellular L-cystine and L-cysteine and for the maintenance of the intracellular levels of glutathione that is essential for cells protection from oxidative stress. The transport is sodium-independent, electroneutral with a stoichiometry of 1:1, and is drove by the high intracellular concentration of L-glutamate and the intracellular reduction of L-cystine. In addition, mediates the import of L-kynurenine leading to anti-ferroptotic signaling propagation required to maintain L-cystine and glutathione homeostasis. Moreover, mediates N-acetyl-L-cysteine uptake into the placenta leading to subsequently down-regulation of pathways associated with oxidative stress, inflammation and apoptosis. In vitro can also transport L-aspartate. May participate in astrocyte and meningeal cell proliferation during development and can provide neuroprotection by promoting glutathione synthesis and delivery from non-neuronal cells such as astrocytes and meningeal cells to immature neurons. Controls the production of pheomelanin pigment directly. This is Cystine/glutamate transporter from Pongo abelii (Sumatran orangutan).